Reading from the N-terminus, the 122-residue chain is RING-box protein 1B (122 aa).

The span at 1–23 shows a compositional bias: acidic residues; sequence MAEEIEVEETEDFHDMDFNDEEP. The interval 1–28 is disordered; sequence MAEEIEVEETEDFHDMDFNDEEPSCSGG. Zn(2+)-binding residues include C57, C60, C68, C71, C82, C89, H91, H94, H96, C108, and D111. The RING-type zinc finger occupies 57 to 112; sequence CAICRNHIMNLCIECQADPNANQDECTVAWGECNHAFHYHCIARWLKTRLVCPLDN.

The protein belongs to the RING-box family. In terms of assembly, part of a SCF complex consisting of Skpa (SKP1), Cul1, Roc1B and a F-box protein. In terms of tissue distribution, highly expressed in early embryos, and in pupae. Widely expressed in adult males, while it is weakly expressed in adult females.

Its subcellular location is the cytoplasm. It localises to the nucleus. Its pathway is protein modification; protein ubiquitination. Its function is as follows. Component of the SCF (SKP1-CUL1-F-box protein) E3 ubiquitin ligase complex, which mediates the ubiquitination and subsequent proteasomal degradation of target proteins. Through the RING-type zinc finger, seems to recruit the E2 ubiquitination enzyme to the complex and brings it into close proximity to the substrate. The protein is RING-box protein 1B (Roc1b) of Drosophila melanogaster (Fruit fly).